The following is a 692-amino-acid chain: Methionine--tRNA ligase (692 aa).

The 'HIGH' region signature appears at 12-22 (PYANGSFHIGH). 4 residues coordinate Zn(2+): Cys143, Cys146, Cys156, and Cys159. A 'KMSKS' region motif is present at residues 341 to 345 (KMSKS). Residue Lys344 participates in ATP binding. The tRNA-binding domain occupies 586 to 692 (DFAKIDLRIA…PGAQPGMRVR (107 aa)).

The protein belongs to the class-I aminoacyl-tRNA synthetase family. MetG type 1 subfamily. As to quaternary structure, homodimer. Zn(2+) serves as cofactor.

Its subcellular location is the cytoplasm. It carries out the reaction tRNA(Met) + L-methionine + ATP = L-methionyl-tRNA(Met) + AMP + diphosphate. In terms of biological role, is required not only for elongation of protein synthesis but also for the initiation of all mRNA translation through initiator tRNA(fMet) aminoacylation. The polypeptide is Methionine--tRNA ligase (Bordetella pertussis (strain Tohama I / ATCC BAA-589 / NCTC 13251)).